The sequence spans 508 residues: Aldehyde dehydrogenase family 7 member B4 (508 aa).

244–249 (GSSRVG) is a binding site for NAD(+). Glu266 serves as the catalytic Proton acceptor. The Nucleophile role is filled by Cys300.

Belongs to the aldehyde dehydrogenase family. In terms of assembly, homotetramer.

The catalysed reaction is an aldehyde + NAD(+) + H2O = a carboxylate + NADH + 2 H(+). The protein is Aldehyde dehydrogenase family 7 member B4 (ALDH7B4) of Arabidopsis thaliana (Mouse-ear cress).